The chain runs to 311 residues: MLSARNSMMFGHLSPVRIPRLRGKFNLQLPSLDEQVIPARLLKMEVRAEEPKEATEVKDQVETQGQEDNKMGPCSNGEAASTSRPLETQGNLTSSWYNPRPLEGNVHLKSLTEKNQTDKAQVHAVSFYSKGHGVASSHSPAGGILPFGKPDPLPTVLPAPVPGCSLWPEKAALKVLGKDHLPSSPGLLMVGEDMQPKDPAVLGSSRSSPPRAAGHRSRKRKLSGPPLQLQLTPPLQLRWDRDGGPPPAKLPCLSPEALLVGQASQREGRLQQGNMRKNMRVLSRTSKFRRRKQLLRRRKKTRQGRRGGSCL.

The span at 48–61 shows a compositional bias: basic and acidic residues; that stretch reads AEEPKEATEVKDQV. 3 disordered regions span residues 48-99, 186-229, and 291-311; these read AEEP…WYNP, GLLM…PLQL, and RKQLLRRRKKTRQGRRGGSCL. Polar residues predominate over residues 78–97; the sequence is EAASTSRPLETQGNLTSSWY. 2 stretches are compositionally biased toward basic residues: residues 213–222 and 291–305; these read AGHRSRKRKL and RKQLLRRRKKTRQGR.

This sequence belongs to the UPF0607 family.

This chain is Putative UPF0607 protein ENSP00000382826, found in Homo sapiens (Human).